A 239-amino-acid chain; its full sequence is Purine nucleoside phosphorylase DeoD-type 1 (239 aa).

Histidine 5 is an a purine D-ribonucleoside binding site. Residues glycine 21, arginine 25, arginine 44, and 88–91 each bind phosphate; that span reads RVGS. Residues 180-182 and 204-205 contribute to the a purine D-ribonucleoside site; these read EME and SD. The Proton donor role is filled by aspartate 205.

This sequence belongs to the PNP/UDP phosphorylase family. In terms of assembly, homohexamer; trimer of homodimers.

It carries out the reaction a purine D-ribonucleoside + phosphate = a purine nucleobase + alpha-D-ribose 1-phosphate. The enzyme catalyses a purine 2'-deoxy-D-ribonucleoside + phosphate = a purine nucleobase + 2-deoxy-alpha-D-ribose 1-phosphate. Its function is as follows. Catalyzes the reversible phosphorolytic breakdown of the N-glycosidic bond in the beta-(deoxy)ribonucleoside molecules, with the formation of the corresponding free purine bases and pentose-1-phosphate. In Vibrio vulnificus (strain CMCP6), this protein is Purine nucleoside phosphorylase DeoD-type 1.